Reading from the N-terminus, the 1032-residue chain is Integrin alpha-4 (1032 aa).

Positions Met1–Pro33 are cleaved as a signal peptide. FG-GAP repeat units follow at residues Asn35–Thr100, Asn110–Ser177, Gln185–Ala237, Phe238–Leu291, Asn292–Met351, Glu355–Ser412, and Gln416–Ser478. Topologically, residues Asn35–Thr977 are extracellular. A glycan (N-linked (GlcNAc...) asparagine) is linked at Asn79. An intrachain disulfide couples Cys91 to Cys101. N-linked (GlcNAc...) asparagine glycosylation is present at Asn138. Cystine bridges form between Cys144-Cys165 and Cys183-Cys198. The N-linked (GlcNAc...) asparagine glycan is linked to Asn229. Ca(2+) is bound by residues Asp314, Asn316, Asp318, Asp322, Asp377, Asp379, Asp381, Asp385, Asp439, Asp441, Asn443, Tyr445, and Asp447. A glycan (N-linked (GlcNAc...) asparagine) is linked at Asn480. 2 disulfide bridges follow: Cys486-Cys495 and Cys501-Cys557. N-linked (GlcNAc...) asparagine glycosylation is found at Asn518 and Asn538. Residues Lys606–Ile616 carry the SG1 motif. The cysteines at positions 622 and 627 are disulfide-linked. N-linked (GlcNAc...) asparagine glycosylation is found at Asn626, Asn645, and Asn660. A disulfide bridge connects residues Cys698 and Cys711. Asn806 and Asn821 each carry an N-linked (GlcNAc...) asparagine glycan. Intrachain disulfides connect Cys852–Cys890 and Cys897–Cys902. Residues Ile978–Lys1001 traverse the membrane as a helical segment. At Ala1002 to Asp1032 the chain is on the cytoplasmic side. The GFFKR motif motif lies at Gly1003–Arg1007. Phosphoserine is present on Ser1021.

The protein belongs to the integrin alpha chain family. In terms of assembly, heterodimer of an alpha and a beta subunit. The alpha subunit can sometimes be cleaved into two non-covalently associated fragments. Alpha-4 associates with either beta-1 or beta-7. Alpha-4 interacts with PXN, LPXN, and TGFB1I1/HIC5. Interacts with CSPG4 through CSPG4 chondroitin sulfate glycosaminoglycan. Interacts with JAML; integrin alpha-4/beta-1 may regulate leukocyte to endothelial cells adhesion by controlling JAML homodimerization. ITGA4:ITGB1 is found in a ternary complex with CX3CR1 and CX3CL1. Interacts with MDK. ITGA4:ITGB1 interacts with MDK; this interaction mediates MDK-induced osteoblast cells migration through PXN phosphorylation. Integrin ITGA4:ITGB1 interacts with SVEP1 (via Sushi domain 21); thereby inhibits Ca(2+) intracellular signaling and as a result represses vasocontraction. ITGA4:ITGB1 interacts with SELP. ITGA4:ITGB1 interacts with BCAM. Post-translationally, phosphorylation on Ser-1027 inhibits PXN binding. Expressed in vascular smooth muscle cells (at protein level).

The protein resides in the membrane. Functionally, integrins alpha-4/beta-1 (VLA-4) and alpha-4/beta-7 are receptors for fibronectin. They recognize one or more domains within the alternatively spliced CS-1 and CS-5 regions of fibronectin. They are also receptors for VCAM1. Integrin alpha-4/beta-1 recognizes the sequence Q-I-D-S in VCAM1. Integrin alpha-4/beta-7 is also a receptor for MADCAM1. It recognizes the sequence L-D-T in MADCAM1. On activated endothelial cells integrin VLA-4 triggers homotypic aggregation for most VLA-4-positive leukocyte cell lines. It may also participate in cytolytic T-cell interactions with target cells. ITGA4:ITGB1 binds to fractalkine (CX3CL1) and may act as its coreceptor in CX3CR1-dependent fractalkine signaling. ITGA4:ITGB1 binds to PLA2G2A via a site (site 2) which is distinct from the classical ligand-binding site (site 1) and this induces integrin conformational changes and enhanced ligand binding to site 1. Integrin ITGA4:ITGB1 represses PRKCA-mediated L-type voltage-gated channel Ca(2+) influx and ROCK-mediated calcium sensitivity in vascular smooth muscle cells via its interaction with SVEP1, thereby inhibiting vasocontraction. The sequence is that of Integrin alpha-4 (ITGA4) from Homo sapiens (Human).